A 1204-amino-acid chain; its full sequence is Probable cation-transporting ATPase 13A4 (1204 aa).

Topologically, residues 1 to 32 (MGENPAKSHYAQLNLGEENEMEIFGYKTQCCR) are cytoplasmic. Residues 33-53 (KALCIAGYILSCGALLLLFYW) traverse the membrane as a helical segment. Over 54–219 (KPEWDVWANC…FSVCLWFAED (166 aa)) the chain is Extracellular. Residues 220–242 (YMEYAAAIIIMSPLSISLTVYDL) traverse the membrane as a helical segment. The Cytoplasmic portion of the chain corresponds to 243–397 (RQQSVKLQRL…NFRLYRDALR (155 aa)). The chain crosses the membrane as a helical span at residues 398–418 (FLMCLIAFAAIGMIYTVCVFA). Topologically, residues 419 to 433 (LNGEEAGEVVKKALD) are extracellular. The helical transmembrane segment at 434–454 (VITIAVPPALPAALTTGIIYT) threads the bilayer. Residues 455 to 897 (QRRLKKKGIF…REGRAALVTS (443 aa)) are Cytoplasmic-facing. The 4-aspartylphosphate intermediate role is filled by aspartate 483. Mg(2+) is bound by residues aspartate 845 and aspartate 849. The helical transmembrane segment at 898-918 (FCMFKYMALYSTIQYLGVLLL) threads the bilayer. Residues 919-929 (YWQLNSFGNYQ) lie on the Extracellular side of the membrane. Residues 930 to 950 (FLFQDLAITTVIGMTMSFTEA) form a helical membrane-spanning segment. The Cytoplasmic segment spans residues 951-967 (YPKLVPYRPPSQLVSPP). Residues 968–988 (LLLSVILNILFSLGMQILGFL) form a helical membrane-spanning segment. Topologically, residues 989 to 1043 (MVQKQPWYSKTDIHSACLSVNNHVENSSSASSLGLHGVGGGDPTEVDNGYKSYEN) are extracellular. A helical membrane pass occupies residues 1044-1064 (TTVWLLSTINCLIIALVFSKG). Residues 1065-1075 (KPFRQPIYTNY) are Cytoplasmic-facing. Residues 1076–1096 (VFIMVLVGQLGVCLFLVFADI) traverse the membrane as a helical segment. The Extracellular portion of the chain corresponds to 1097–1113 (DDLYSKMDLVCTPTTWR). A helical membrane pass occupies residues 1114–1134 (ISMVMMLAVTLAVSFLVEEAI). Residues 1135–1204 (IENRALWLWL…PTFDSNEDAL (70 aa)) are Cytoplasmic-facing.

This sequence belongs to the cation transport ATPase (P-type) (TC 3.A.3) family. Type V subfamily.

It localises to the membrane. It catalyses the reaction ATP + H2O = ADP + phosphate + H(+). The protein is Probable cation-transporting ATPase 13A4 (ATP13A4) of Gallus gallus (Chicken).